We begin with the raw amino-acid sequence, 140 residues long: FlaA locus uncharacterized protein YlxG (140 aa).

The interval 1 to 21 is disordered; it reads MTSISSEYKLPEKTNTVSTNN.

This sequence belongs to the FlgD family.

The chain is FlaA locus uncharacterized protein YlxG (ylxG) from Bacillus subtilis (strain 168).